The following is a 37-amino-acid chain: Large ribosomal subunit protein bL36 (37 aa).

It belongs to the bacterial ribosomal protein bL36 family.

The chain is Large ribosomal subunit protein bL36 from Desulfotalea psychrophila (strain LSv54 / DSM 12343).